We begin with the raw amino-acid sequence, 847 residues long: Acyl-homoserine lactone acylase QuiP (847 aa).

An N-terminal signal peptide occupies residues 1 to 26; that stretch reads MASPAFMRFLPRCGAAAAFGTLLGLA. The active-site Nucleophile is the Ser-265.

This sequence belongs to the peptidase S45 family. Heterodimer of an alpha subunit and a beta subunit processed from the same precursor.

It is found in the periplasm. The catalysed reaction is an N-acyl-L-homoserine lactone + H2O = L-homoserine lactone + a carboxylate. Its function is as follows. Catalyzes the deacylation of acyl-homoserine lactone (AHL or acyl-HSL), releasing homoserine lactone (HSL) and the corresponding fatty acid. Possesses a specificity for the degradation of long-chain acyl-HSLs (side chains of seven or more carbons in length). Appears to be the acyl-HSL acylase that underlies the ability of P.aeruginosa to degrade and utilize certain acyl-HSLs as growth nutrients, including one of its own quorum signals, 3-oxo-C12-HSL. Is thought to have a role in quorum quenching. The polypeptide is Acyl-homoserine lactone acylase QuiP (quiP) (Pseudomonas aeruginosa (strain ATCC 15692 / DSM 22644 / CIP 104116 / JCM 14847 / LMG 12228 / 1C / PRS 101 / PAO1)).